A 428-amino-acid polypeptide reads, in one-letter code: Histone deacetylase 3 (428 aa).

Residues asparagine 3–glutamate 316 form a histone deacetylase region. Positions 17, 21, and 25 each coordinate 1D-myo-inositol 1,4,5,6-tetrakisphosphate. Histidine 135 is a catalytic residue. Zn(2+)-binding residues include aspartate 170, histidine 172, and aspartate 259. Arginine 265 provides a ligand contact to 1D-myo-inositol 1,4,5,6-tetrakisphosphate. The segment at leucine 385–isoleucine 428 is disordered. Composition is skewed to basic and acidic residues over residues asparagine 386–threonine 405 and aspartate 415–isoleucine 428.

Belongs to the histone deacetylase family. HD type 1 subfamily.

It localises to the nucleus. The protein resides in the chromosome. The protein localises to the cytoplasm. It is found in the cytosol. The catalysed reaction is N(6)-acetyl-L-lysyl-[histone] + H2O = L-lysyl-[histone] + acetate. Its activity is regulated as follows. Inositol tetraphosphate (1D-myo-inositol 1,4,5,6-tetrakisphosphate) promotes the histone deacetylase activity by acting as an intermolecular glue between hdac3 and N-Cor repressor complex components. Responsible for the deacetylation of lysine residues on the N-terminal part of the core histones (H2A, H2B, H3 and H4). Histone deacetylation gives a tag for epigenetic repression and plays an important role in transcriptional regulation, cell cycle progression and developmental events. Histone deacetylases act via the formation of large multiprotein complexes, such as N-Cor repressor complex, which activate the histone deacetylase activity. May play a role in the regulation of the circadian clock in a deacetylase activity-independent manner. This Tetraodon nigroviridis (Spotted green pufferfish) protein is Histone deacetylase 3 (hdac3).